A 453-amino-acid polypeptide reads, in one-letter code: Probable acetylornithine aminotransferase, mitochondrial (453 aa).

An N6-(pyridoxal phosphate)lysine modification is found at Lys302.

This sequence belongs to the class-III pyridoxal-phosphate-dependent aminotransferase family. Requires pyridoxal 5'-phosphate as cofactor.

The protein localises to the mitochondrion matrix. It carries out the reaction N(2)-acetyl-L-ornithine + 2-oxoglutarate = N-acetyl-L-glutamate 5-semialdehyde + L-glutamate. It participates in amino-acid biosynthesis; L-arginine biosynthesis; N(2)-acetyl-L-ornithine from L-glutamate: step 4/4. This is Probable acetylornithine aminotransferase, mitochondrial (argD) from Dictyostelium discoideum (Social amoeba).